The sequence spans 144 residues: MLDIQQIKEIIPHRYPFLLVDKVLEVEEGKRAIGIKNVTANEEFFNGHFPDYPVMPGVLIVEALAQVGAVAMLKKEENRGRLAFFAGIDNCRFKRQVRPGDQLRLEVEMTRVRGAIGKGKAIATVDGEIACETEITFALGDKKE.

The active site involves H48.

It belongs to the thioester dehydratase family. FabZ subfamily.

It is found in the cytoplasm. It carries out the reaction a (3R)-hydroxyacyl-[ACP] = a (2E)-enoyl-[ACP] + H2O. Involved in unsaturated fatty acids biosynthesis. Catalyzes the dehydration of short chain beta-hydroxyacyl-ACPs and long chain saturated and unsaturated beta-hydroxyacyl-ACPs. The protein is 3-hydroxyacyl-[acyl-carrier-protein] dehydratase FabZ of Bacillus anthracis (strain A0248).